The following is an 81-amino-acid chain: Photosystem I iron-sulfur center (81 aa).

2 consecutive 4Fe-4S ferredoxin-type domains span residues 2-31 (AHSVKIYDTCIGCTQCVRACPTDVLEMIPW) and 39-68 (IASAPRTEDCVGCKRCESACPTDFLSVRVY). [4Fe-4S] cluster contacts are provided by Cys11, Cys14, Cys17, Cys21, Cys48, Cys51, Cys54, and Cys58.

In terms of assembly, the eukaryotic PSI reaction center is composed of at least 11 subunits. The cofactor is [4Fe-4S] cluster.

The protein localises to the plastid. Its subcellular location is the chloroplast thylakoid membrane. It carries out the reaction reduced [plastocyanin] + hnu + oxidized [2Fe-2S]-[ferredoxin] = oxidized [plastocyanin] + reduced [2Fe-2S]-[ferredoxin]. Functionally, apoprotein for the two 4Fe-4S centers FA and FB of photosystem I (PSI); essential for photochemical activity. FB is the terminal electron acceptor of PSI, donating electrons to ferredoxin. The C-terminus interacts with PsaA/B/D and helps assemble the protein into the PSI complex. Required for binding of PsaD and PsaE to PSI. PSI is a plastocyanin-ferredoxin oxidoreductase, converting photonic excitation into a charge separation, which transfers an electron from the donor P700 chlorophyll pair to the spectroscopically characterized acceptors A0, A1, FX, FA and FB in turn. The chain is Photosystem I iron-sulfur center from Staurastrum punctulatum (Green alga).